The following is a 96-amino-acid chain: Protein RnfH (96 aa).

The protein belongs to the UPF0125 (RnfH) family.

The protein is Protein RnfH of Escherichia fergusonii (strain ATCC 35469 / DSM 13698 / CCUG 18766 / IAM 14443 / JCM 21226 / LMG 7866 / NBRC 102419 / NCTC 12128 / CDC 0568-73).